The primary structure comprises 303 residues: MAKKGRGRSKGTFVAVLKNKAYFKRYQPKFKRRREGKTDYFARKRLCVQDKNKYNTPKYRLVVRVTNKDIIAQIAYARLQGDVIVTSAYAHELPRYGVSVGLTNYSAAYATGLLIGRRVLQKFGLDSMYEGQIEVDGDEFYEEADAAEKASFRCYLDTGLARTSTGARIFGVLKGCADAGIDIPHSPKRFPGFADGKLNAEAHKDHIFGGHVGDYMEKLEEENEEAYKRQFSRFIKNGINSENIEEMYKKAHAAIRADPSPKAKVEKTVDKKRWNRAKISYAQRRARVAQVKASFLRAQEAEE.

The protein belongs to the universal ribosomal protein uL18 family. In terms of assembly, component of the large ribosomal subunit (LSU).

The protein resides in the cytoplasm. It localises to the nucleus. Functionally, component of the ribosome, a large ribonucleoprotein complex responsible for the synthesis of proteins in the cell. The small ribosomal subunit (SSU) binds messenger RNAs (mRNAs) and translates the encoded message by selecting cognate aminoacyl-transfer RNA (tRNA) molecules. The large subunit (LSU) contains the ribosomal catalytic site termed the peptidyl transferase center (PTC), which catalyzes the formation of peptide bonds, thereby polymerizing the amino acids delivered by tRNAs into a polypeptide chain. The nascent polypeptides leave the ribosome through a tunnel in the LSU and interact with protein factors that function in enzymatic processing, targeting, and the membrane insertion of nascent chains at the exit of the ribosomal tunnel. This is Large ribosomal subunit protein uL18 (RPL5) from Oikopleura dioica (Tunicate).